We begin with the raw amino-acid sequence, 456 residues long: MTOR-associated protein MEAK7 (456 aa).

The N-myristoyl glycine moiety is linked to residue glycine 2. The 169-residue stretch at 244 to 412 (SILDVLSVMY…FDKMEVWAVG (169 aa)) folds into the TLDc domain.

Interacts (via C-terminal domain) with MTOR and MLST8; the interaction with MTOR increases upon nutrient stimulation.

Its subcellular location is the membrane. The protein resides in the cytoplasm. The protein localises to the lysosome. In terms of biological role, activates an alternative mTOR signaling through RPS6KB2 activation and EIF4EBP1 repression to regulate cell proliferation and migration. Recruits MTOR at the lysosome, essential for MTOR signaling at the lysosome. This is MTOR-associated protein MEAK7 from Homo sapiens (Human).